The chain runs to 308 residues: Phosphoribosylaminoimidazole-succinocarboxamide synthase (308 aa).

Belongs to the SAICAR synthetase family.

The catalysed reaction is 5-amino-1-(5-phospho-D-ribosyl)imidazole-4-carboxylate + L-aspartate + ATP = (2S)-2-[5-amino-1-(5-phospho-beta-D-ribosyl)imidazole-4-carboxamido]succinate + ADP + phosphate + 2 H(+). It participates in purine metabolism; IMP biosynthesis via de novo pathway; 5-amino-1-(5-phospho-D-ribosyl)imidazole-4-carboxamide from 5-amino-1-(5-phospho-D-ribosyl)imidazole-4-carboxylate: step 1/2. The polypeptide is Phosphoribosylaminoimidazole-succinocarboxamide synthase (Xylella fastidiosa (strain 9a5c)).